We begin with the raw amino-acid sequence, 65 residues long: Large ribosomal subunit protein uL29 (65 aa).

This sequence belongs to the universal ribosomal protein uL29 family.

In Delftia acidovorans (strain DSM 14801 / SPH-1), this protein is Large ribosomal subunit protein uL29.